Consider the following 367-residue polypeptide: 2-aminoethylphosphonate--pyruvate transaminase (367 aa).

Position 194 is an N6-(pyridoxal phosphate)lysine (lysine 194).

Belongs to the class-V pyridoxal-phosphate-dependent aminotransferase family. PhnW subfamily. In terms of assembly, homodimer. The cofactor is pyridoxal 5'-phosphate.

It carries out the reaction (2-aminoethyl)phosphonate + pyruvate = phosphonoacetaldehyde + L-alanine. In terms of biological role, involved in phosphonate degradation. In Salmonella paratyphi A (strain ATCC 9150 / SARB42), this protein is 2-aminoethylphosphonate--pyruvate transaminase.